The sequence spans 416 residues: MSKRRVAADLPSGTNSSMPVQRHRVSSLRGTHSPSSLDSPPASRTSAVGSLVRAPGVYVGVAPSGGIGGLGARVTRRALGISSVFLQGLRSSGLANVPAPGPERDHTTVEDLGGCLVEYMTKVHALEQVSQELETQLRAHLESKAKSSGGWDALRASWASSYQQVGEAVLENARLLLQMETIQAGADDFKERYENEQPFRKAAEEEVSSLYKVIDEANLTKTDLEHQIESLKEELGFLSRSYEEDVKVLYKQLAGSELEQADVPMGTGLDDVLETIRVQWERDVEKNRAEAGALLQAKQQTEVVHVSQTQEEKLAAALSVELHDTSRQVQSLQAETESLRALKRGLENSLHDAQHWHDMELQNLGAVVGRLEAELAEIRSETEQQQQERAHLLACKSQLQKDVASYHALLDREENN.

Residues 1–48 (MSKRRVAADLPSGTNSSMPVQRHRVSSLRGTHSPSSLDSPPASRTSAV) form a disordered region. S2 is modified (N-acetylserine). The interval 2-115 (SKRRVAADLP…HTTVEDLGGC (114 aa)) is head. Residues S27, S33, S36, and S91 each carry the phosphoserine modification. The span at 28–48 (LRGTHSPSSLDSPPASRTSAV) shows a compositional bias: polar residues. One can recognise an IF rod domain in the interval 105 to 416 (DHTTVEDLGG…HALLDREENN (312 aa)). Coiled coils occupy residues 116-146 (LVEY…SKAK), 170-249 (LENA…VKVL), and 308-402 (QTQE…LQKD). A tail region spans residues 397 to 416 (SQLQKDVASYHALLDREENN).

This sequence belongs to the intermediate filament family. In terms of assembly, part of a complex required for lens intermediate filament formation composed of BFSP1, BFSP2 and CRYAA. Found in a complex composed of PPL (via C-terminal linker domain), BFSP1 and BFSP2 in the retinal lens. Within the complex interacts with PPL (via C-terminal linker domain) and with BFSP1. Identified in a complex that contains VIM, EZR, AHNAK, BFSP1, BFSP2, ANK2, PLEC, PRX and spectrin. Interacts with LGSN. Interacts with VIM. Detected in retina lens fiber cells (at protein level). Also expressed in the lens epithelium, abundantly expressed in the anterior and anterolateral epithelium, less frequently expressed nearer the lens coronal equator (at protein level).

The protein localises to the cell membrane. It is found in the cytoplasm. It localises to the cytoskeleton. Its subcellular location is the cell cortex. In terms of biological role, required for the correct formation of lens intermediate filaments as part of a complex composed of BFSP1, BFSP2 and CRYAA. Plays a role in maintenance of retinal lens optical clarity. This Mus musculus (Mouse) protein is Phakinin (Bfsp2).